We begin with the raw amino-acid sequence, 172 residues long: MILNEDIRAREVRLIGVDGQQVGVVSKNEALRKAADADLDLVLLSPNAKPPVARIMDYGKFRFEQQKKAKENRKNQKVMAVKEIRLSPTIEGNDFDTKLKHVRKFLTKGAKVRVSIRFRGRAITHKELGKQVLEKMADEASDLSNVVTKPKMEGRSMFLMLAPLSEKDKKKK.

It belongs to the IF-3 family. Monomer.

Its subcellular location is the cytoplasm. Its function is as follows. IF-3 binds to the 30S ribosomal subunit and shifts the equilibrium between 70S ribosomes and their 50S and 30S subunits in favor of the free subunits, thus enhancing the availability of 30S subunits on which protein synthesis initiation begins. The protein is Translation initiation factor IF-3 of Lactobacillus johnsonii (strain CNCM I-12250 / La1 / NCC 533).